A 504-amino-acid chain; its full sequence is L-amino-acid oxidase (504 aa).

The signal sequence occupies residues M1–C18. A disulfide bond links C28 and C191. FAD-binding positions include M61–S62, E81–A82, R89, and G105–R108. Residue R108 coordinates substrate. An N-linked (GlcNAc...) asparagine glycan is attached at N190. Residue H241 coordinates substrate. V279 contributes to the FAD binding site. C349 and C430 form a disulfide bridge. Residue N379 is glycosylated (N-linked (GlcNAc...) asparagine). Y390 provides a ligand contact to substrate. FAD is bound by residues E475 and G482–T487. G482–W483 lines the substrate pocket.

The protein belongs to the flavin monoamine oxidase family. FIG1 subfamily. As to quaternary structure, homodimer; non-covalently linked. The cofactor is FAD. Expressed by the venom gland.

It is found in the secreted. The enzyme catalyses an L-alpha-amino acid + O2 + H2O = a 2-oxocarboxylate + H2O2 + NH4(+). The catalysed reaction is L-leucine + O2 + H2O = 4-methyl-2-oxopentanoate + H2O2 + NH4(+). Functionally, catalyzes an oxidative deamination of predominantly hydrophobic and aromatic L-amino acids, thus producing hydrogen peroxide that may contribute to the diverse toxic effects of this enzyme. Shows activity on L-Leu. Exhibits diverse biological activities, such as apoptosis, and inhibition of agonist- and shear stress-induced platelet aggregation (SIPA). Effects of snake L-amino oxidases on platelets are controversial, since they either induce aggregation or inhibit agonist-induced aggregation. These different effects are probably due to different experimental conditions. This protein may also induce hemorrhage, hemolysis, edema, antibacterial and antiparasitic activities. The sequence is that of L-amino-acid oxidase from Gloydius blomhoffii (Mamushi).